The sequence spans 573 residues: Ribonuclease J (573 aa).

A disordered region spans residues 1–29 (MENQERKPRRRRRRRPQEGSQGGPQDHVE). Zn(2+) is bound by residues histidine 93, histidine 95, aspartate 97, histidine 98, histidine 168, and aspartate 190. Residues 259–261 (ASH) and 390–394 (HASGH) each bind substrate. Histidine 416 is a Zn(2+) binding site.

The protein belongs to the metallo-beta-lactamase superfamily. RNA-metabolizing metallo-beta-lactamase-like family. Bacterial RNase J subfamily. Homodimer. May be a subunit of the RNA degradosome. Requires Zn(2+) as cofactor.

It localises to the cytoplasm. In terms of biological role, an RNase that has endonuclease and possibly 5'-3' exonuclease activity. Probably involved in maturation of rRNA and in some organisms also mRNA maturation and/or decay. The protein is Ribonuclease J of Thermus thermophilus (strain ATCC BAA-163 / DSM 7039 / HB27).